The sequence spans 261 residues: UPF0246 protein Daci_5283 (261 aa).

This sequence belongs to the UPF0246 family.

The polypeptide is UPF0246 protein Daci_5283 (Delftia acidovorans (strain DSM 14801 / SPH-1)).